Consider the following 1516-residue polypeptide: Neurite extension and migration factor (1516 aa).

Residues 380–405 are compositionally biased toward basic and acidic residues; it reads LDKKKGKEEGQEDKGVEKKDGKDNGE. 5 disordered regions span residues 380 to 440, 589 to 610, 1158 to 1225, 1373 to 1419, and 1437 to 1479; these read LDKK…GSFS, QKKK…SQKQ, TFND…STKK, TPQE…PGYN, and LGNN…ESGT. Composition is skewed to polar residues over residues 596–610, 1158–1170, and 1185–1194; these read NTNT…SQKQ, TFND…STNN, and GAMNQSSSQK. A compositionally biased stretch (basic residues) spans 1443–1453; that stretch reads THKKLYRHKSS. The span at 1456–1479 shows a compositional bias: basic and acidic residues; it reads ALRDEKCKGKHMEREQVHKDESGT.

Highly expressed in fetal and adult brain, predominantly in the cerebral cortex and the cerebellum. Also expressed in other tissues but to a lesser extent.

The protein resides in the nucleus. It localises to the cytoplasm. Functionally, involved in neurite outgrowth by regulating cell-cell adhesion via the N-cadherin signaling pathway. May act by regulating expression of protein-coding genes, such as N-cadherins and integrin beta-1 (ITGB1). This chain is Neurite extension and migration factor, found in Homo sapiens (Human).